The following is a 196-amino-acid chain: Putative NADH dehydrogenase/NAD(P)H nitroreductase SCO5049 (196 aa).

The protein belongs to the nitroreductase family. HadB/RutE subfamily. It depends on FMN as a cofactor.

This is Putative NADH dehydrogenase/NAD(P)H nitroreductase SCO5049 from Streptomyces coelicolor (strain ATCC BAA-471 / A3(2) / M145).